The chain runs to 240 residues: MAPK-interacting and spindle-stabilizing protein-like (240 aa).

Positions 1–240 are disordered; it reads MSDEFSLADA…PMPGGPHSYH (240 aa). An N-acetylserine modification is found at Ser2. A phosphoserine mark is found at Ser2, Ser6, and Ser15. Positions 16–26 are enriched in polar residues; it reads PAKTSAVSNTK. A compositionally biased stretch (low complexity) spans 34 to 43; sequence WPGSNPWNNP. Composition is skewed to pro residues over residues 44–66, 74–122, 159–185, and 193–202; these read SAPPAVPSGLPPSATPSPVPFGP, SVPP…PELP, PNMPYPSPGPYPAPPPPQAPGAAPPVP, and AWGPPAPYPA.

It belongs to the MISS family.

This chain is MAPK-interacting and spindle-stabilizing protein-like (MAPK1IP1L), found in Bos taurus (Bovine).